A 565-amino-acid polypeptide reads, in one-letter code: uncharacterized protein (565 aa).

5 consecutive transmembrane segments (helical) span residues 14-34 (LAIF…IGKF), 36-56 (LGVV…DITV), 92-112 (MGFA…LAKI), 117-137 (VGEA…IGVA), and 157-177 (IIPV…AWVL). Residues 296 to 381 (PEVLDPQLLD…VDAAAKQLGY (86 aa)) form the RCK C-terminal domain. The next 6 helical transmembrane spans lie at 391-411 (MIFV…SIHM), 414-434 (VPIS…FGWL), 448-468 (ALWI…GIAA), 481-501 (LSLF…GILM), 508-530 (FHPA…LGAI), and 545-565 (VTYA…VLLM).

Belongs to the AAE transporter (TC 2.A.81) family.

It localises to the cell membrane. This is an uncharacterized protein from Bacteroides fragilis (strain YCH46).